The primary structure comprises 268 residues: Hemin import ATP-binding protein HmuV (268 aa).

Positions 5–241 constitute an ABC transporter domain; it reads LKAEAASFAL…ELIADVFDVA (237 aa). 37–44 is a binding site for ATP; that stretch reads GPNGAGKS.

Belongs to the ABC transporter superfamily. Heme (hemin) importer (TC 3.A.1.14.5) family. As to quaternary structure, the complex is composed of two ATP-binding proteins (HmuV), two transmembrane proteins (HmuU) and a solute-binding protein (HmuT).

It is found in the cell inner membrane. In terms of biological role, part of the ABC transporter complex HmuTUV involved in hemin import. Responsible for energy coupling to the transport system. This Rhodopseudomonas palustris (strain ATCC BAA-98 / CGA009) protein is Hemin import ATP-binding protein HmuV.